Reading from the N-terminus, the 157-residue chain is Large ribosomal subunit protein eL24 (157 aa).

K2 participates in a covalent cross-link: Glycyl lysine isopeptide (Lys-Gly) (interchain with G-Cter in SUMO2). An ADP-ribosyl glutamic acid modification is found at E4. K27 carries the post-translational modification N6-acetyllysine; alternate. A Glycyl lysine isopeptide (Lys-Gly) (interchain with G-Cter in SUMO2); alternate cross-link involves residue K27. K35 participates in a covalent cross-link: Glycyl lysine isopeptide (Lys-Gly) (interchain with G-Cter in SUMO2). K77 carries the N6-acetyllysine modification. The residue at position 83 (T83) is a Phosphothreonine. S86 carries the post-translational modification Phosphoserine. K93 is modified (N6-acetyllysine). Residues 106–117 (EQAIRAAKEAKK) are compositionally biased toward basic and acidic residues. A disordered region spans residues 106–157 (EQAIRAAKEAKKAKQASKKTAMAAAKAPTKAAPKQKIVKPVKVSAPRVGGKR). The segment covering 123 to 140 (KKTAMAAAKAPTKAAPKQ) has biased composition (low complexity). K131 bears the N6-succinyllysine mark. K147 participates in a covalent cross-link: Glycyl lysine isopeptide (Lys-Gly) (interchain with G-Cter in SUMO2). S149 carries the phosphoserine modification.

It belongs to the eukaryotic ribosomal protein eL24 family. Component of the large ribosomal subunit. In terms of processing, mono-ADP-ribosylation at Glu-4 by PARP16 inhibits polysome assembly and mRNA loading, thereby inhibiting protein translation.

It is found in the cytoplasm. Its function is as follows. Component of the large ribosomal subunit. The ribosome is a large ribonucleoprotein complex responsible for the synthesis of proteins in the cell. The protein is Large ribosomal subunit protein eL24 (RPL24) of Bos taurus (Bovine).